Consider the following 247-residue polypeptide: Bidirectional sugar transporter SWEET1 (247 aa).

Topologically, residues 1–6 (MNIAHT) are extracellular. The chain crosses the membrane as a helical span at residues 7 to 27 (IFGVFGNATALFLFLAPSITF). The 88-residue stretch at 7 to 94 (IFGVFGNATA…LIFLFYAPKK (88 aa)) folds into the MtN3/slv 1 domain. Over 28 to 41 (KRIIKNKSTEQFSG) the chain is Cytoplasmic. A helical transmembrane segment spans residues 42-62 (IPYPMTLLNCLLSAWYGLPFV). Residues 63 to 71 (SKDNTLVST) lie on the Extracellular side of the membrane. The helical transmembrane segment at 72-92 (INGTGAVIETVYVLIFLFYAP) threads the bilayer. The Cytoplasmic segment spans residues 93-98 (KKEKIK). Residues 99 to 119 (IFGIFSCVLAVFATVALVSLF) traverse the membrane as a helical segment. Topologically, residues 120–127 (ALQGNGRK) are extracellular. Residues 128-148 (LFCGLAATVFSIIMYASPLSI) traverse the membrane as a helical segment. One can recognise a MtN3/slv 2 domain in the interval 130–213 (CGLAATVFSI…ILYFIYCGNK (84 aa)). At 149–162 (MRLVVKTKSVEFMP) the chain is on the cytoplasmic side. Residues 163–183 (FFLSLFVFLCGTSWFVYGLIG) traverse the membrane as a helical segment. At 184 to 187 (RDPF) the chain is on the extracellular side. The helical transmembrane segment at 188–208 (VAIPNGFGCALGTLQLILYFI) threads the bilayer. Residues 209–247 (YCGNKGEKSADAQKDEKSVEMKDDEKKQNVVNGKQDLQV) lie on the Cytoplasmic side of the membrane. The segment covering 221–236 (QKDEKSVEMKDDEKKQ) has biased composition (basic and acidic residues). Positions 221–247 (QKDEKSVEMKDDEKKQNVVNGKQDLQV) are disordered. Residues 237-247 (NVVNGKQDLQV) show a composition bias toward polar residues.

The protein belongs to the SWEET sugar transporter family. In terms of assembly, forms homooligomers and heterooligomers with SWEET9, SWEET11, SWEET13, SWEET15, SWEET16 and SWEET17. As to expression, mainly expressed in flowers.

The protein localises to the cell membrane. It is found in the endoplasmic reticulum membrane. Mediates both low-affinity uptake and efflux of sugar across the plasma membrane. Can transport glucose, and, to a lower extent, mannose, fructose and galactose. This chain is Bidirectional sugar transporter SWEET1, found in Arabidopsis thaliana (Mouse-ear cress).